A 367-amino-acid polypeptide reads, in one-letter code: Glutamate 5-kinase (367 aa).

Lys10 lines the ATP pocket. The substrate site is built by Ser50, Asp137, and Asn149. ATP-binding positions include 169-170 (TD) and 211-217 (TGGMGTK). In terms of domain architecture, PUA spans 275–353 (AGELTVDAGA…QQIDAILGYE (79 aa)).

This sequence belongs to the glutamate 5-kinase family.

Its subcellular location is the cytoplasm. The enzyme catalyses L-glutamate + ATP = L-glutamyl 5-phosphate + ADP. Its pathway is amino-acid biosynthesis; L-proline biosynthesis; L-glutamate 5-semialdehyde from L-glutamate: step 1/2. Catalyzes the transfer of a phosphate group to glutamate to form L-glutamate 5-phosphate. In Klebsiella pneumoniae (strain 342), this protein is Glutamate 5-kinase.